Reading from the N-terminus, the 201-residue chain is Recombination protein RecR (201 aa).

Residues 57 to 72 (CADCRTFTEQDVCNIC) form a C4-type zinc finger. Residues 81–176 (GQICVVESPA…EASRIAHGVP (96 aa)) enclose the Toprim domain.

Belongs to the RecR family.

In terms of biological role, may play a role in DNA repair. It seems to be involved in an RecBC-independent recombinational process of DNA repair. It may act with RecF and RecO. The sequence is that of Recombination protein RecR from Citrobacter koseri (strain ATCC BAA-895 / CDC 4225-83 / SGSC4696).